A 484-amino-acid polypeptide reads, in one-letter code: Zinc metalloproteinase-disintegrin stejnitin (484 aa).

The first 20 residues, M1–S20, serve as a signal peptide directing secretion. The propeptide occupies I21–E192. Residue Q193 is modified to Pyrrolidone carboxylic acid. In terms of domain architecture, Peptidase M12B spans R194 to P392. Residue E197 participates in Ca(2+) binding. N-linked (GlcNAc...) asparagine glycosylation occurs at N254. D281 is a binding site for Ca(2+). Intrachain disulfides connect C305/C387, C345/C369, and C347/C352. Residues H330, H334, and H340 each coordinate Zn(2+). Ca(2+)-binding residues include C387, N390, V402, N405, E409, E412, and D415. The region spanning P400–A484 is the Disintegrin domain. Cystine bridges form between C403-C422, C414-C432, C416-C427, C426-C449, C440-C446, C445-C470, and C458-C477. Residues K462–D464 carry the Cell attachment site motif.

The protein belongs to the venom metalloproteinase (M12B) family. P-II subfamily. P-IIb sub-subfamily. Zn(2+) serves as cofactor. In terms of processing, the N-terminus is blocked. In terms of tissue distribution, expressed by the venom gland.

Its subcellular location is the secreted. Its function is as follows. Snake venom zinc metalloproteinase that inhibits ADP-induced platelet aggregation in human platelet-rich plasma (IC(50) is 175 nM) and cleaves alpha-(FGA) and subsequently the beta-chain (FGG) of bovine fibrinogen, leaving the gamma-chain unaffected. It is also able to inhibit proliferatin of ECV304 cells by inducing apoptosis of these cells. In Trimeresurus stejnegeri (Chinese green tree viper), this protein is Zinc metalloproteinase-disintegrin stejnitin.